The following is a 277-amino-acid chain: Phosphatidylglycerol--prolipoprotein diacylglyceryl transferase (277 aa).

7 helical membrane-spanning segments follow: residues 21-41 (LAVRWYGLMYLFGFMFALWLA), 60-80 (LLFAGFLGVVIGGRVGYVLFY), 95-115 (VWTGGMSFHGGLLGVISAMLW), 124-144 (FFTIADFVAPLVPFGLGAGRL), 176-196 (SQLYEFALEGVVLFLILNWFI), 203-223 (GTVSGLFLFGYGTFRFLVEYV), and 239-259 (MGQILSLPMVIGGLLMMLWAF). Arginine 143 serves as a coordination point for a 1,2-diacyl-sn-glycero-3-phospho-(1'-sn-glycerol).

This sequence belongs to the Lgt family.

It is found in the cell inner membrane. It catalyses the reaction L-cysteinyl-[prolipoprotein] + a 1,2-diacyl-sn-glycero-3-phospho-(1'-sn-glycerol) = an S-1,2-diacyl-sn-glyceryl-L-cysteinyl-[prolipoprotein] + sn-glycerol 1-phosphate + H(+). The protein operates within protein modification; lipoprotein biosynthesis (diacylglyceryl transfer). In terms of biological role, catalyzes the transfer of the diacylglyceryl group from phosphatidylglycerol to the sulfhydryl group of the N-terminal cysteine of a prolipoprotein, the first step in the formation of mature lipoproteins. This is Phosphatidylglycerol--prolipoprotein diacylglyceryl transferase from Aliivibrio fischeri (strain ATCC 700601 / ES114) (Vibrio fischeri).